The following is a 359-amino-acid chain: MTLESIMACCLSEEAKEARRINDEIERQLRRDKRDARRELKLLLLGTGESGKSTFIKQMRIIHGSGYSDEDKRGFTKLVYQNIFTAMQAMIRAMDTLKIPYKYEHNKAHAQLVREVDVEKVSAFENPYVDAIKSLWNDPGIQECYDRRREYQLSDSTKYYLNDLDRVADPAYLPTQQDVLRVRVPTTGIIEYPFDLQSVIFRMVDVGGQRSERRKWIHCFENVTSIMFLVALSEYDQVLVESDNENRMEESKALFRTIITYPWFQNSSVILFLNKKDLLEEKIMYSHLVDYFPEYDGPQRDAQAAREFILKMFVDLNPDSDKIIYSHFTCATDTENIRFVFAAVKDTILQLNLKEYNLV.

Residues cysteine 9 and cysteine 10 are each lipidated (S-palmitoyl cysteine). Residues 38–359 form the G-alpha domain; that stretch reads RELKLLLLGT…QLNLKEYNLV (322 aa). The tract at residues 41–54 is G1 motif; the sequence is KLLLLGTGESGKST. 9 residues coordinate GTP: serine 50, glycine 51, lysine 52, serine 53, threonine 54, serine 156, leucine 180, arginine 181, and arginine 183. Position 53 (serine 53) interacts with Mg(2+). The interval 178–186 is G2 motif; sequence DVLRVRVPT. Threonine 186 serves as a coordination point for Mg(2+). The segment at 201–210 is G3 motif; it reads FRMVDVGGQR. A 5-glutamyl histamine modification is found at glutamine 209. Residues 270-277 form a G4 motif region; it reads ILFLNKKD. Asparagine 274, lysine 275, aspartate 277, and alanine 331 together coordinate GTP. The tract at residues 329 to 334 is G5 motif; the sequence is TCATDT.

Belongs to the G-alpha family. G(q) subfamily. In terms of assembly, g proteins are composed of 3 units; alpha, beta and gamma. The alpha chain contains the guanine nucleotide binding site. Interacts (GDP-bound form) with RIC8A (via C-terminus); promoting GNAQ folding and association with the plasma membrane. Binds NHERF1. Forms a complex with PECAM1 and BDKRB2. Interacts with GAS2L2. Post-translationally, palmitoylated by ZDHHC3 and ZDHHC7. Palmitoylation occurs in the Golgi and participates in the localization of GNAQ to the plasma membrane. Histaminylated at Gln-209 residues by TGM2.

Its subcellular location is the cell membrane. It is found in the golgi apparatus. The protein localises to the nucleus. It localises to the nucleus membrane. It carries out the reaction GTP + H2O = GDP + phosphate + H(+). Its function is as follows. Guanine nucleotide-binding proteins (G proteins) function as transducers downstream of G protein-coupled receptors (GPCRs) in numerous signaling cascades. The alpha chain contains the guanine nucleotide binding site and alternates between an active, GTP-bound state and an inactive, GDP-bound state. Signaling by an activated GPCR promotes GDP release and GTP binding. The alpha subunit has a low GTPase activity that converts bound GTP to GDP, thereby terminating the signal. Both GDP release and GTP hydrolysis are modulated by numerous regulatory proteins. Signaling is mediated via phospholipase C-beta-dependent inositol lipid hydrolysis for signal propagation: activates phospholipase C-beta: following GPCR activation, GNAQ activates PLC-beta (PLCB1, PLCB2, PLCB3 or PLCB4), leading to production of diacylglycerol (DAG) and inositol 1,4,5-trisphosphate (IP3). Required for platelet activation. Regulates B-cell selection and survival and is required to prevent B-cell-dependent autoimmunity. Regulates chemotaxis of BM-derived neutrophils and dendritic cells (in vitro). Transduces FFAR4 signaling in response to long-chain fatty acids (LCFAs). Together with GNA11, required for heart development. In Canis lupus familiaris (Dog), this protein is Guanine nucleotide-binding protein G(q) subunit alpha (GNAQ).